Reading from the N-terminus, the 521-residue chain is Hyccin (521 aa).

At T306 the chain carries Phosphothreonine. S321 is subject to Phosphoserine. The span at A355 to N373 shows a compositional bias: low complexity. The segment at A355 to A413 is disordered. Over residues G390–A406 the composition is skewed to basic and acidic residues. S415, S422, S433, S453, and S465 each carry phosphoserine.

Belongs to the Hyccin family. Component of a phosphatidylinositol 4-kinase (PI4K) complex, composed of PI4KA, EFR3 (EFR3A or EFR3B), TTC7 (TTC7A or TTC7B) and HYCC (HYCC1 or HYCC2). Interacts with TTC7 (TTC7A or TTC7B), interaction is direct. As to expression, predominantly expressed in the central nervous system, where it is found in neurons but not in myelinating cells. Lower abundance is observed in peripheral neurons, where it is detectable only at early postnatal ages. Expressed in both oligodendrocytes and neurons.

It is found in the cytoplasm. It localises to the cytosol. The protein resides in the cell membrane. Its function is as follows. Component of a complex required to localize phosphatidylinositol 4-kinase (PI4K) to the plasma membrane. The complex acts as a regulator of phosphatidylinositol 4-phosphate (PtdIns(4)P) synthesis. HYCC1 plays a key role in oligodendrocytes formation, a cell type with expanded plasma membrane that requires generation of PtdIns(4)P. Its role in oligodendrocytes formation probably explains its importance in myelination of the central and peripheral nervous system. May also have a role in the beta-catenin/Lef signaling pathway. The polypeptide is Hyccin (Hycc1) (Mus musculus (Mouse)).